An 869-amino-acid polypeptide reads, in one-letter code: Leucine--tRNA ligase (869 aa).

Residues 42 to 52 (PYPSGKLHMGH) carry the 'HIGH' region motif. Residues 624–628 (TMSKS) carry the 'KMSKS' region motif. An ATP-binding site is contributed by lysine 627.

This sequence belongs to the class-I aminoacyl-tRNA synthetase family.

It is found in the cytoplasm. It catalyses the reaction tRNA(Leu) + L-leucine + ATP = L-leucyl-tRNA(Leu) + AMP + diphosphate. The polypeptide is Leucine--tRNA ligase (Nitrosomonas europaea (strain ATCC 19718 / CIP 103999 / KCTC 2705 / NBRC 14298)).